Reading from the N-terminus, the 739-residue chain is ABC transporter G family member 20 (739 aa).

An ABC transporter domain is found at 88–351 (LSFKDLTYSV…FSEFGHPIPE (264 aa)). Residue 144–151 (GASGSGKS) participates in ATP binding. Residues 433-643 (TEMLVIGKRS…PYEGVLQNEF (211 aa)) form the ABC transmembrane type-2 domain. 6 consecutive transmembrane segments (helical) span residues 452–472 (LFGIRLGAVLVTGMILATIFW), 487–507 (FFAFAMSTTFYTCAEAIPVFL), 528–548 (VLAHTIISIPALIILSAAFAA), 563–583 (FLFFFFTILTAFWAGSSFVTF), 593–613 (IGFTVVVAILAYFLLFSGFFI), and 712–732 (LWITVAWGFFFRVLFYFTLLI).

It belongs to the ABC transporter superfamily. ABCG family. Eye pigment precursor importer (TC 3.A.1.204) subfamily.

It is found in the membrane. This Arabidopsis thaliana (Mouse-ear cress) protein is ABC transporter G family member 20 (ABCG20).